Here is a 272-residue protein sequence, read N- to C-terminus: Putative phosphoenolpyruvate synthase regulatory protein (272 aa).

G152 to T159 provides a ligand contact to ADP.

The protein belongs to the pyruvate, phosphate/water dikinase regulatory protein family. PSRP subfamily.

It carries out the reaction [pyruvate, water dikinase] + ADP = [pyruvate, water dikinase]-phosphate + AMP + H(+). It catalyses the reaction [pyruvate, water dikinase]-phosphate + phosphate + H(+) = [pyruvate, water dikinase] + diphosphate. In terms of biological role, bifunctional serine/threonine kinase and phosphorylase involved in the regulation of the phosphoenolpyruvate synthase (PEPS) by catalyzing its phosphorylation/dephosphorylation. The protein is Putative phosphoenolpyruvate synthase regulatory protein of Hahella chejuensis (strain KCTC 2396).